The following is a 173-amino-acid chain: Alpha-crystallin A chain (173 aa).

Methionine 1 carries the N-acetylmethionine modification. Positions 1–63 (MDIAIQHPWF…RTVLDSGISE (63 aa)) are required for complex formation with BFSP1 and BFSP2. A Deamidated glutamine; partial modification is found at glutamine 6. Serine 45 is subject to Phosphoserine. At glutamine 50 the chain carries Deamidated glutamine; partial. One can recognise a sHSP domain in the interval 52 to 162 (LFRTVLDSGI…GHSERAIPVS (111 aa)). Lysine 70 is subject to N6-acetyllysine. Glutamine 90 carries the post-translational modification Deamidated glutamine; partial. Residue lysine 99 is modified to N6-acetyllysine. Position 100 (histidine 100) interacts with Zn(2+). A Deamidated asparagine; partial modification is found at asparagine 101. Glutamate 102 and histidine 107 together coordinate Zn(2+). Residue serine 122 is modified to Phosphoserine. The residue at position 123 (asparagine 123) is a Deamidated asparagine; partial. A disordered region spans residues 144 to 173 (PKVPSGLDAGHSERAIPVSREEKPSSAPSS). Residues 153 to 167 (GHSERAIPVSREEKP) are compositionally biased toward basic and acidic residues. Histidine 154 provides a ligand contact to Zn(2+). A glycan (O-linked (GlcNAc) serine) is linked at serine 162.

It belongs to the small heat shock protein (HSP20) family. In terms of assembly, heteromer composed of three CRYAA and one CRYAB subunits. Inter-subunit bridging via zinc ions enhances stability, which is crucial as there is no protein turn over in the lens. Can also form homodimers and homotetramers (dimers of dimers) which serve as the building blocks of homooligomers. Within homooligomers, the zinc-binding motif is created from residues of 3 different molecules. His-100 and Glu-102 from one molecule are ligands of the zinc ion, and His-107 and His-154 residues from additional molecules complete the site with tetrahedral coordination geometry. Part of a complex required for lens intermediate filament formation composed of BFSP1, BFSP2 and CRYAA. In terms of processing, acetylation at Lys-70 may increase chaperone activity. Post-translationally, undergoes age-dependent proteolytical cleavage at the C-terminus.

The protein resides in the cytoplasm. It is found in the nucleus. Contributes to the transparency and refractive index of the lens. Acts as a chaperone, preventing aggregation of various proteins under a wide range of stress conditions. Required for the correct formation of lens intermediate filaments as part of a complex composed of BFSP1, BFSP2 and CRYAA. The polypeptide is Alpha-crystallin A chain (CRYAA) (Tapirus indicus (Asiatic tapir)).